A 107-amino-acid polypeptide reads, in one-letter code: uncharacterized protein (107 aa).

Positions methionine 1–alanine 34 are cleaved as a signal peptide.

This is an uncharacterized protein from Saccharomyces cerevisiae (strain ATCC 204508 / S288c) (Baker's yeast).